The primary structure comprises 330 residues: MKKTFILQQQEISFVKNTFTQNLIEQLGIIEVQGPILSQVGNGMQDNLSGIEKAVQVNVKCIPNAIFEVVHSLAKWKRHTLARFNFKEDEGLFVHMKALRPDEDSLDPTHSVYVDQWDWEKVIPEGRRNFAYLKETVNSIYRAIRLTELAVEARFDIPSILPKQITFVHSEDLVKRYPDLSSKERENAICKEYGAVFLIGIGGKLSDGKPHDGRAPDYDDWTTESENGYKGLNGDILVWNDQLGKAFELSSMGIRVDESALRLQVGLTGDEDRLKMDWHQDLLNGKLPLTIGGGIGQSRLAMLLLRKKHIGEVQSSVWPKEMLEEFSNIL.

The protein belongs to the class-II aminoacyl-tRNA synthetase family. AsnA subfamily.

It localises to the cytoplasm. The enzyme catalyses L-aspartate + NH4(+) + ATP = L-asparagine + AMP + diphosphate + H(+). The protein operates within amino-acid biosynthesis; L-asparagine biosynthesis; L-asparagine from L-aspartate (ammonia route): step 1/1. In Haemophilus influenzae (strain 86-028NP), this protein is Aspartate--ammonia ligase.